The chain runs to 386 residues: DNA-directed RNA polymerase subunit Rpo1C (386 aa).

It belongs to the RNA polymerase beta' chain family. In terms of assembly, part of the RNA polymerase complex.

It localises to the cytoplasm. The enzyme catalyses RNA(n) + a ribonucleoside 5'-triphosphate = RNA(n+1) + diphosphate. In terms of biological role, DNA-dependent RNA polymerase (RNAP) catalyzes the transcription of DNA into RNA using the four ribonucleoside triphosphates as substrates. Forms part of the jaw domain. In Methanococcus maripaludis (strain C7 / ATCC BAA-1331), this protein is DNA-directed RNA polymerase subunit Rpo1C.